The primary structure comprises 283 residues: HTH-type transcriptional activator RhaR (283 aa).

An HTH araC/xylS-type domain is found at 179 to 277 (DLLMAALGNS…GVTPRVWRQQ (99 aa)). DNA-binding regions (H-T-H motif) lie at residues 196–217 (QHFC…RQQT) and 244–267 (ISEI…TRET).

As to quaternary structure, binds DNA as a dimer.

The protein localises to the cytoplasm. Its function is as follows. Activates expression of the rhaSR operon in response to L-rhamnose. This chain is HTH-type transcriptional activator RhaR, found in Cronobacter sakazakii (strain ATCC BAA-894) (Enterobacter sakazakii).